The chain runs to 355 residues: Probable zinc transporter 12 (355 aa).

The N-terminal stretch at 1–25 is a signal peptide; sequence MSRFRKTLVSAFVLCLVIFPLLVSA. At 26-50 the chain is on the extracellular side; that stretch reads AEEENQCGGSKGGSAAEKASALKYK. The helical transmembrane segment at 51–71 threads the bilayer; the sequence is IIAFFSILIAGVFGVCLPIFG. The Cytoplasmic segment spans residues 72 to 77; the sequence is LKTESN. A helical transmembrane segment spans residues 78–98; sequence FFMYVKAFAAGVILATGFVHI. The Extracellular portion of the chain corresponds to 99–116; sequence LPDATESLTSSCLGEEPP. A helical transmembrane segment spans residues 117 to 137; the sequence is WGDFPMTGLVAMAASILTMLI. At 138–200 the chain is on the cytoplasmic side; it reads ESFASGYLNR…DDDHIDMRKK (63 aa). The disordered stretch occupies residues 156-183; that stretch reads TLPVSTGGEEEHAHTGSAHTHASQGHSH. Residues 201–221 traverse the membrane as a helical segment; that stretch reads IVTQILELGIVVHSVIIGISL. Residues 222–231 lie on the Extracellular side of the membrane; it reads GASPSVSTIK. A helical transmembrane segment spans residues 232 to 252; that stretch reads PLIAAITFHQLFEGFGLGGCI. The Cytoplasmic segment spans residues 253 to 261; sequence SEAKFRVKK. Residues 262-282 form a helical membrane-spanning segment; that stretch reads IWVMLMFFALTAPIGIGIGIG. Topologically, residues 283–302 are extracellular; it reads VAEIYNENSPMALKVSGFLN. Residues 303–323 traverse the membrane as a helical segment; that stretch reads ATASGILIYMALVDLVAPLFM. Residues 324-334 lie on the Cytoplasmic side of the membrane; it reads NQKTQSSMKIQ. The helical transmembrane segment at 335–355 threads the bilayer; sequence VACSVSLVVGAGLMSLLAIWA.

This sequence belongs to the ZIP transporter (TC 2.A.5) family.

Its subcellular location is the cell membrane. Its function is as follows. Zinc transporter involved in zinc uptake in roots. Targeted by BZIP23 transcription factor in response to zinc-deficient conditions. This is Probable zinc transporter 12 (ZIP12) from Arabidopsis thaliana (Mouse-ear cress).